The following is a 200-amino-acid chain: BREX protein BrxB (200 aa).

The protein belongs to the BrxB family.

Its function is as follows. BREX systems (bacteriophage exclusion) provide immunity against bacteriophage. Part of a type 1 BREX system which protects against dsDNA phage. This system allows phage adsorption but prevents phage DNA replication, without degradation of the phage DNA. Methylation of bacterial DNA by PglX guides self/non-self discrimination. When the brxA-brxB-brxC-pglX-pglZ-brxL genes are transformed into a susceptible E.coli strain (BW25113) they confer very high resistance to infection by bacteriophage VR7 and VpaE1, about 100-fold protection against lambda, T5 and T7 and no protection against RNA phage Qbeta, ssDNA phage M13 or dSDNA phage T4 and VR5. Glycosylated phage DNA is not susceptible to BREX. The BREX system does not confer resistance to lysogenic lambda phage, i.e. prophage that are integrated into the chromosomal DNA and then induced to form phage. This chain is BREX protein BrxB, found in Escherichia coli O9:H4 (strain HS).